Here is a 419-residue protein sequence, read N- to C-terminus: tRNA modification GTPase MnmE (419 aa).

(6S)-5-formyl-5,6,7,8-tetrahydrofolate-binding residues include Arg-2, Glu-59, and Arg-99. The region spanning 197–343 is the TrmE-type G domain; that stretch reads GLSVVIAGPP…LHTMIVEMAR (147 aa). Asn-207 contributes to the K(+) binding site. GTP is bound by residues 207–212, 226–232, and 251–254; these read NAGKST, SPVAGTT, and DTAG. Ser-211 is a binding site for Mg(2+). Ser-226, Val-228, and Thr-231 together coordinate K(+). Thr-232 is a Mg(2+) binding site. Lys-419 lines the (6S)-5-formyl-5,6,7,8-tetrahydrofolate pocket.

This sequence belongs to the TRAFAC class TrmE-Era-EngA-EngB-Septin-like GTPase superfamily. TrmE GTPase family. As to quaternary structure, homodimer. Heterotetramer of two MnmE and two MnmG subunits. It depends on K(+) as a cofactor.

It localises to the cytoplasm. In terms of biological role, exhibits a very high intrinsic GTPase hydrolysis rate. Involved in the addition of a carboxymethylaminomethyl (cmnm) group at the wobble position (U34) of certain tRNAs, forming tRNA-cmnm(5)s(2)U34. In Sphingopyxis alaskensis (strain DSM 13593 / LMG 18877 / RB2256) (Sphingomonas alaskensis), this protein is tRNA modification GTPase MnmE.